Consider the following 556-residue polypeptide: Cell wall integrity and stress response component 3 (556 aa).

The N-terminal stretch at 1 to 38 is a signal peptide; sequence MERVWFAKLTNKGTIKIGYISFILLSLLCQSLIGLVNA. Positions 39–132 constitute a WSC domain; sequence DFNYEGCYSA…SSYMNVYVNA (94 aa). At 39 to 384 the chain is on the extracellular side; sequence DFNYEGCYSA…QRLSGGAIAG (346 aa). The N-linked (GlcNAc...) asparagine glycan is linked to Asn-84. Low complexity-rich tracts occupy residues 142 to 169 and 184 to 257; these read SSSK…SSTT and TTVS…STTS. Disordered regions lie at residues 142–257 and 269–312; these read SSSK…STTS and TLSS…PSTS. N-linked (GlcNAc...) asparagine glycosylation is found at Asn-367 and Asn-370. Residues 385-405 traverse the membrane as a helical segment; that stretch reads IVIGVVFGVIFIILILLFLIW. The Cytoplasmic segment spans residues 406–556; it reads RRRKSHDQLD…LSSTVSHNRA (151 aa). 2 disordered regions span residues 425–444 and 534–556; these read YSFG…SGTT and LQVV…HNRA. Polar residues predominate over residues 546 to 556; sequence ELSSTVSHNRA.

Its subcellular location is the membrane. The sequence is that of Cell wall integrity and stress response component 3 (WSC3) from Saccharomyces cerevisiae (strain ATCC 204508 / S288c) (Baker's yeast).